Reading from the N-terminus, the 488-residue chain is Proline--tRNA ligase (488 aa).

Belongs to the class-II aminoacyl-tRNA synthetase family. ProS type 3 subfamily. In terms of assembly, homodimer.

It localises to the cytoplasm. The enzyme catalyses tRNA(Pro) + L-proline + ATP = L-prolyl-tRNA(Pro) + AMP + diphosphate. Its function is as follows. Catalyzes the attachment of proline to tRNA(Pro) in a two-step reaction: proline is first activated by ATP to form Pro-AMP and then transferred to the acceptor end of tRNA(Pro). The sequence is that of Proline--tRNA ligase from Pyrobaculum arsenaticum (strain DSM 13514 / JCM 11321 / PZ6).